Here is a 511-residue protein sequence, read N- to C-terminus: Cytochrome P450 714C3 (511 aa).

The Lumenal portion of the chain corresponds to 1–6 (MEKLLA). Residues 7 to 27 (LIVVLVILLSLALFYLCNILW) traverse the membrane as a helical; Signal-anchor for type III membrane protein segment. Over 28–511 (LRAVKIRKKL…GLPLMVTKLP (484 aa)) the chain is Cytoplasmic. Cys458 provides a ligand contact to heme.

The protein belongs to the cytochrome P450 family. It depends on heme as a cofactor.

The protein localises to the membrane. This is Cytochrome P450 714C3 (CYP714C3) from Oryza sativa subsp. japonica (Rice).